The primary structure comprises 372 residues: 4-hydroxy-3-methylbut-2-en-1-yl diphosphate synthase (flavodoxin) (372 aa).

[4Fe-4S] cluster-binding residues include Cys270, Cys273, Cys305, and Glu312.

It belongs to the IspG family. The cofactor is [4Fe-4S] cluster.

The enzyme catalyses (2E)-4-hydroxy-3-methylbut-2-enyl diphosphate + oxidized [flavodoxin] + H2O + 2 H(+) = 2-C-methyl-D-erythritol 2,4-cyclic diphosphate + reduced [flavodoxin]. It functions in the pathway isoprenoid biosynthesis; isopentenyl diphosphate biosynthesis via DXP pathway; isopentenyl diphosphate from 1-deoxy-D-xylulose 5-phosphate: step 5/6. Its function is as follows. Converts 2C-methyl-D-erythritol 2,4-cyclodiphosphate (ME-2,4cPP) into 1-hydroxy-2-methyl-2-(E)-butenyl 4-diphosphate. This Escherichia coli O139:H28 (strain E24377A / ETEC) protein is 4-hydroxy-3-methylbut-2-en-1-yl diphosphate synthase (flavodoxin).